Consider the following 406-residue polypeptide: MTFSVERVRADFPVLNREVNGQPLAYLDSAASAQKPEAVIGAEAEFYRHGYAAVHRGIHTLSAEATARMEAVRQQAANFLNAGSAEEVVFVRGTTEGINLVANSWGNANVGAGDNIIISEMEHHANIVPWQMLCARVGAELRVIPLNPDGTLQLDVVPGLFDPRTRLLAITEVSNVLGTENPLAALIALAHQHGAKVLVDGAQAVMHHPVDVQALGCDFYVFSGHKLYGPTGIGVLYGRSELLQAMAPWEGGGSMIATVSLTEGTTWNRAPWRFEAGTPNTGGIIGLGAALTYVSQLGLTQIAEYEQTLMRYALEALRAVPDLILYGPAQRKGVIAFNLGQHHAYDVGSFLDNYGIAVRTGHHCAMPLMARYQVPAMCRASLAMYNTTEEVDRLVAGLQRIHKLLG.

K226 bears the N6-(pyridoxal phosphate)lysine mark. The active-site Cysteine persulfide intermediate is the C364.

Belongs to the class-V pyridoxal-phosphate-dependent aminotransferase family. Csd subfamily. In terms of assembly, homodimer. Interacts with SufE and the SufBCD complex composed of SufB, SufC and SufD. The interaction with SufE is required to mediate the direct transfer of the sulfur atom from the S-sulfanylcysteine. The cofactor is pyridoxal 5'-phosphate.

Its subcellular location is the cytoplasm. The enzyme catalyses (sulfur carrier)-H + L-cysteine = (sulfur carrier)-SH + L-alanine. It carries out the reaction L-selenocysteine + AH2 = hydrogenselenide + L-alanine + A + H(+). Its pathway is cofactor biosynthesis; iron-sulfur cluster biosynthesis. Functionally, cysteine desulfurases mobilize the sulfur from L-cysteine to yield L-alanine, an essential step in sulfur metabolism for biosynthesis of a variety of sulfur-containing biomolecules. Component of the suf operon, which is activated and required under specific conditions such as oxidative stress and iron limitation. Acts as a potent selenocysteine lyase in vitro, that mobilizes selenium from L-selenocysteine. Selenocysteine lyase activity is however unsure in vivo. This Klebsiella pneumoniae (strain 342) protein is Cysteine desulfurase.